The following is a 437-amino-acid chain: Probable D-serine dehydratase (437 aa).

At Lys106 the chain carries N6-(pyridoxal phosphate)lysine.

Belongs to the serine/threonine dehydratase family. DsdA subfamily. The cofactor is pyridoxal 5'-phosphate.

The catalysed reaction is D-serine = pyruvate + NH4(+). This Hahella chejuensis (strain KCTC 2396) protein is Probable D-serine dehydratase.